Reading from the N-terminus, the 866-residue chain is DNA topoisomerase 3-beta (866 aa).

Positions 4 to 149 (TVLMVAEKPS…RIFRAKFSSV (146 aa)) constitute a Toprim domain. 3 residues coordinate Mg(2+): E10, D114, and D116. Positions 165–585 (SKDEALAVDA…HVLQQFMKKY (421 aa)) constitute a Topo IA-type catalytic domain. Positions 207-212 (SYGPCQ) are interaction with DNA. Y329 (O-(5'-phospho-DNA)-tyrosine intermediate) is an active-site residue. Positions 830–853 (MRRGRGRGRGRGRGRGSSRGRRGS) are enriched in basic residues. The disordered stretch occupies residues 830-866 (MRRGRGRGRGRGRGRGSSRGRRGSSRHDDPKMSFRDF). Positions 854 to 866 (SRHDDPKMSFRDF) are enriched in basic and acidic residues.

Belongs to the type IA topoisomerase family. Requires Mg(2+) as cofactor.

It carries out the reaction ATP-independent breakage of single-stranded DNA, followed by passage and rejoining.. Releases the supercoiling and torsional tension of DNA introduced during the DNA replication and transcription by transiently cleaving and rejoining one strand of the DNA duplex. Introduces a single-strand break via transesterification at a target site in duplex DNA. The scissile phosphodiester is attacked by the catalytic tyrosine of the enzyme, resulting in the formation of a DNA-(5'-phosphotyrosyl)-enzyme intermediate and the expulsion of a 3'-OH DNA strand. The free DNA strand than undergoes passage around the unbroken strand thus removing DNA supercoils. Finally, in the religation step, the DNA 3'-OH attacks the covalent intermediate to expel the active-site tyrosine and restore the DNA phosphodiester backbone. The protein is DNA topoisomerase 3-beta (TOP3B) of Oryza sativa subsp. japonica (Rice).